The sequence spans 555 residues: Undecaprenyl phosphate-alpha-4-amino-4-deoxy-L-arabinose arabinosyl transferase (555 aa).

Transmembrane regions (helical) follow at residues 6 to 26 (GSWAILLAIFFALVYLIPLNG), 87 to 107 (FGSVFSTGMTALLVFALAMLM), 116 to 136 (LATLIFLSMVLVFSIGTYSVL), 178 to 198 (FMTKGFLALAVPVIAVIPIVI), 206 to 226 (LLIYGPVAIVVAVLLSLPWAL), 257 to 277 (APFWYYVPVLMAAVLPWLALL), 293 to 313 (ELFFLLSWVMMPLIFFSIAKG), 315 to 335 (LPTYILPCMAPLALLMAAYAE), 351 to 371 (VLNGLFGLICILALVVLGSGL), 384 to 404 (PKIVIGIIAFAGWLLFAVVSV), and 411 to 431 (WSWAAACPLLLCLLIGYAIPQ).

It belongs to the glycosyltransferase 83 family.

It localises to the cell inner membrane. It catalyses the reaction 4-amino-4-deoxy-alpha-L-arabinopyranosyl di-trans,octa-cis-undecaprenyl phosphate + lipid IVA = lipid IIA + di-trans,octa-cis-undecaprenyl phosphate.. The protein operates within lipopolysaccharide metabolism; 4-amino-4-deoxy-beta-L-arabinose-lipid A biosynthesis. Functionally, catalyzes the transfer of the L-Ara4N moiety of the glycolipid undecaprenyl phosphate-alpha-L-Ara4N to lipid A. The modified arabinose is attached to lipid A and is required for resistance to polymyxin and cationic antimicrobial peptides. This is Undecaprenyl phosphate-alpha-4-amino-4-deoxy-L-arabinose arabinosyl transferase from Serratia proteamaculans (strain 568).